The chain runs to 570 residues: Periplasmic trehalase (570 aa).

A signal peptide spans 1-34; the sequence is MIPPEIRRSVLLQKAIKLALAGTLLTFASFSATA. Substrate-binding positions include Arg-159, 166–167, Asn-203, 212–214, 284–286, and Gly-317; these read WD, RSQ, and RPE. Catalysis depends on proton donor/acceptor residues Asp-319 and Glu-503. Glu-518 contributes to the substrate binding site. The tract at residues 544–570 is disordered; the sequence is KPCDSVPSTRPASLSATPTKTPSAATQ. A compositionally biased stretch (low complexity) spans 554 to 570; that stretch reads PASLSATPTKTPSAATQ.

Belongs to the glycosyl hydrolase 37 family. Monomer.

It is found in the periplasm. The catalysed reaction is alpha,alpha-trehalose + H2O = alpha-D-glucose + beta-D-glucose. Its function is as follows. Provides the cells with the ability to utilize trehalose at high osmolarity by splitting it into glucose molecules that can subsequently be taken up by the phosphotransferase-mediated uptake system. The polypeptide is Periplasmic trehalase (Salmonella paratyphi B (strain ATCC BAA-1250 / SPB7)).